We begin with the raw amino-acid sequence, 209 residues long: Large ribosomal subunit protein bL25 (209 aa).

Positions 190-209 are disordered; that stretch reads GLKSADDEAEGEDAEEAAAE. Positions 196–209 are enriched in acidic residues; it reads DEAEGEDAEEAAAE.

Belongs to the bacterial ribosomal protein bL25 family. CTC subfamily. In terms of assembly, part of the 50S ribosomal subunit; part of the 5S rRNA/L5/L18/L25 subcomplex. Contacts the 5S rRNA. Binds to the 5S rRNA independently of L5 and L18.

This is one of the proteins that binds to the 5S RNA in the ribosome where it forms part of the central protuberance. The protein is Large ribosomal subunit protein bL25 of Ruegeria sp. (strain TM1040) (Silicibacter sp.).